The primary structure comprises 571 residues: Coenzyme A biosynthesis protein 3 (571 aa).

2 disordered regions span residues 1 to 72 and 100 to 120; these read MTDE…YKND and INTS…PSLP. The segment covering 8-35 has biased composition (polar residues); that stretch reads SDQNMNGKQGVNLISSLPTTQVPVSILT. Ser42 carries the post-translational modification Phosphoserine. Over residues 43 to 59 the composition is skewed to basic and acidic residues; it reads IHDESNFERSDSHEDQS. Residues 60–72 show a composition bias toward polar residues; that stretch reads KSNSNRRNIYKND. 3 positions are modified to phosphoserine: Ser116, Ser121, and Ser124. 2 disordered regions span residues 140-171 and 209-244; these read ISNK…LQEQ and IFKE…SMEK. A compositionally biased stretch (low complexity) spans 146-171; that stretch reads KQQQQQEQLQQNQQQEEQQKAQLQEQ. Ser264 bears the Phosphoserine mark. The disordered stretch occupies residues 507 to 571; the sequence is RDEETGDKEQ…EDEEDVKTEV (65 aa). Acidic residues predominate over residues 516–571; that stretch reads QEQEEQEGADNEDDDDEDDEEDEEDEEEEEALNETASDESNDEEDEEDEEDVKTEV.

It belongs to the HFCD (homooligomeric flavin containing Cys decarboxylase) superfamily. Component of the phosphopantothenoylcysteine decarboxylase (PPCDC) complex, a heterotrimer composed of CAB3, HAL3 and VHS3.

Its subcellular location is the cytoplasm. Its function is as follows. Component of the phosphopantothenoylcysteine decarboxylase (PPCDC) involved in the coenzyme A synthesis. This is Coenzyme A biosynthesis protein 3 (CAB3) from Saccharomyces cerevisiae (strain ATCC 204508 / S288c) (Baker's yeast).